Reading from the N-terminus, the 788-residue chain is Bifunctional purine biosynthetic protein ADE1 (788 aa).

The interval 1–429 (MSLRILLVGN…NRKDIAYKAF (429 aa)) is GARS. In terms of domain architecture, ATP-grasp spans 114–323 (KDFMKKHNIP…LAEVMLACVE (210 aa)). Position 140–201 (140–201 (VKKVGHRVVI…EEFLEGDELS (62 aa))) interacts with ATP. Residues Glu291 and Asn293 each contribute to the Mg(2+) site. The interval 439 to 752 (ITYAQAGVSI…VVKQEKVAEV (314 aa)) is AIRS.

This sequence in the N-terminal section; belongs to the GARS family. The protein in the C-terminal section; belongs to the AIR synthase family. It depends on Mg(2+) as a cofactor. The cofactor is Mn(2+).

Its subcellular location is the cytoplasm. It is found in the cytosol. The catalysed reaction is 5-phospho-beta-D-ribosylamine + glycine + ATP = N(1)-(5-phospho-beta-D-ribosyl)glycinamide + ADP + phosphate + H(+). It carries out the reaction 2-formamido-N(1)-(5-O-phospho-beta-D-ribosyl)acetamidine + ATP = 5-amino-1-(5-phospho-beta-D-ribosyl)imidazole + ADP + phosphate + H(+). The protein operates within purine metabolism; IMP biosynthesis via de novo pathway; 5-amino-1-(5-phospho-D-ribosyl)imidazole from N(2)-formyl-N(1)-(5-phospho-D-ribosyl)glycinamide: step 2/2. Its pathway is purine metabolism; IMP biosynthesis via de novo pathway; N(1)-(5-phospho-D-ribosyl)glycinamide from 5-phospho-alpha-D-ribose 1-diphosphate: step 2/2. Catalyzes the second and fifth step in the 'de novo' purine biosynthesis pathway; contains phosphoribosylamine--glycine ligase (GARS) and phosphoribosylformylglycinamidine cyclo-ligase (AIRS) activities. The protein is Bifunctional purine biosynthetic protein ADE1 of Yarrowia lipolytica (strain CLIB 122 / E 150) (Yeast).